A 254-amino-acid chain; its full sequence is 4-hydroxy-tetrahydrodipicolinate reductase (254 aa).

NAD(+)-binding positions include 8–13 (GCSGKM), Asp35, 86–88 (CST), and 110–113 (SANM). The Proton donor/acceptor role is filled by His143. Residue His144 coordinates (S)-2,3,4,5-tetrahydrodipicolinate. Lys147 serves as the catalytic Proton donor. (S)-2,3,4,5-tetrahydrodipicolinate is bound at residue 153–154 (GT).

Belongs to the DapB family.

Its subcellular location is the cytoplasm. The catalysed reaction is (S)-2,3,4,5-tetrahydrodipicolinate + NAD(+) + H2O = (2S,4S)-4-hydroxy-2,3,4,5-tetrahydrodipicolinate + NADH + H(+). The enzyme catalyses (S)-2,3,4,5-tetrahydrodipicolinate + NADP(+) + H2O = (2S,4S)-4-hydroxy-2,3,4,5-tetrahydrodipicolinate + NADPH + H(+). The protein operates within amino-acid biosynthesis; L-lysine biosynthesis via DAP pathway; (S)-tetrahydrodipicolinate from L-aspartate: step 4/4. Functionally, catalyzes the conversion of 4-hydroxy-tetrahydrodipicolinate (HTPA) to tetrahydrodipicolinate. This chain is 4-hydroxy-tetrahydrodipicolinate reductase, found in Clostridium perfringens (strain ATCC 13124 / DSM 756 / JCM 1290 / NCIMB 6125 / NCTC 8237 / Type A).